A 343-amino-acid polypeptide reads, in one-letter code: Glyceraldehyde-3-phosphate dehydrogenase 1 (343 aa).

NAD(+) is bound by residues 13–14 (RI), aspartate 35, arginine 79, and serine 121. D-glyceraldehyde 3-phosphate contacts are provided by residues 154 to 156 (SCT), threonine 185, 214 to 215 (TG), and arginine 237. The Nucleophile role is filled by cysteine 155. NAD(+) is bound at residue asparagine 319.

It belongs to the glyceraldehyde-3-phosphate dehydrogenase family. In terms of assembly, homotetramer.

The protein resides in the cytoplasm. It catalyses the reaction D-glyceraldehyde 3-phosphate + phosphate + NAD(+) = (2R)-3-phospho-glyceroyl phosphate + NADH + H(+). Its pathway is carbohydrate degradation; glycolysis; pyruvate from D-glyceraldehyde 3-phosphate: step 1/5. Functionally, catalyzes the oxidative phosphorylation of glyceraldehyde 3-phosphate (G3P) to 1,3-bisphosphoglycerate (BPG) using the cofactor NAD. The first reaction step involves the formation of a hemiacetal intermediate between G3P and a cysteine residue, and this hemiacetal intermediate is then oxidized to a thioester, with concomitant reduction of NAD to NADH. The reduced NADH is then exchanged with the second NAD, and the thioester is attacked by a nucleophilic inorganic phosphate to produce BPG. The sequence is that of Glyceraldehyde-3-phosphate dehydrogenase 1 (gap1) from Trichormus variabilis (strain ATCC 29413 / PCC 7937) (Anabaena variabilis).